The following is a 320-amino-acid chain: Cytochrome f (320 aa).

Residues 1–35 (MQTRKTLSWIKEEITRSISLSLMLSIITHASLSNA) form the signal peptide. Residues tyrosine 36, cysteine 56, cysteine 59, and histidine 60 each coordinate heme. The helical transmembrane segment at 286–306 (VQGLLFFLTSVLLAQIFLVLK) threads the bilayer.

This sequence belongs to the cytochrome f family. In terms of assembly, the 4 large subunits of the cytochrome b6-f complex are cytochrome b6, subunit IV (17 kDa polypeptide, petD), cytochrome f and the Rieske protein, while the 4 small subunits are PetG, PetL, PetM and PetN. The complex functions as a dimer. Heme serves as cofactor.

Its subcellular location is the plastid. It localises to the chloroplast thylakoid membrane. Functionally, component of the cytochrome b6-f complex, which mediates electron transfer between photosystem II (PSII) and photosystem I (PSI), cyclic electron flow around PSI, and state transitions. The sequence is that of Cytochrome f from Pelargonium hortorum (Common geranium).